The following is a 510-amino-acid chain: Serine/threonine-protein kinase RIO3 (510 aa).

Disordered stretches follow at residues 100-126 (GSSS…ENED) and 143-191 (DEEN…DMVG). Composition is skewed to basic and acidic residues over residues 108–118 (TPDRYHPKTMQ) and 162–179 (TKHD…KTFN). In terms of domain architecture, Protein kinase spans 235–510 (LLLLKWINQG…RGISPAREYN (276 aa)). ATP is bound by residues 241–249 (INQGVFDSV) and K275. The Proton acceptor role is filled by D388. Residues 474–499 (RSVDLRHDKSRPADMELKKYNEEKKA) are compositionally biased toward basic and acidic residues. Residues 474–510 (RSVDLRHDKSRPADMELKKYNEEKKANRGISPAREYN) are disordered.

The protein belongs to the protein kinase superfamily. RIO-type Ser/Thr kinase family. Mg(2+) serves as cofactor. As to expression, expressed in tail neurons (PVQ and PHAL/PQR).

The enzyme catalyses L-seryl-[protein] + ATP = O-phospho-L-seryl-[protein] + ADP + H(+). The catalysed reaction is L-threonyl-[protein] + ATP = O-phospho-L-threonyl-[protein] + ADP + H(+). In Caenorhabditis elegans, this protein is Serine/threonine-protein kinase RIO3 (riok-3).